Here is a 477-residue protein sequence, read N- to C-terminus: D(1B) dopamine receptor (477 aa).

The Extracellular segment spans residues 1–39; it reads MLPPGSNGTAYPGQFALYQQLAQGNAVGGSAGAPPLGPS. N-linked (GlcNAc...) asparagine glycosylation is present at Asn7. Residues 40–66 traverse the membrane as a helical segment; that stretch reads QVVTACLLTLLIIWTLLGNVLVCAAIV. Over 67–77 the chain is Cytoplasmic; the sequence is RSRHLRANMTN. The chain crosses the membrane as a helical span at residues 78–104; it reads VFIVSLAVSDLFVALLVMPWKAVAEVA. The Extracellular portion of the chain corresponds to 105-114; the sequence is GYWPFGAFCD. Cys113 and Cys217 are oxidised to a cystine. The chain crosses the membrane as a helical span at residues 115–136; the sequence is VWVAFDIMCSTASILNLCVISV. Over 137–158 the chain is Cytoplasmic; sequence DRYWAISRPFRYKRKMTQRMAL. Residues 159–180 traverse the membrane as a helical segment; the sequence is VMVGLAWTLSILISFIPVQLNW. The Extracellular segment spans residues 181–223; the sequence is HRDQAASWGGLDLPNNLANWTPWEEDFWEPDVNAENCDSSLNR. Residue Asn222 is glycosylated (N-linked (GlcNAc...) asparagine). A helical transmembrane segment spans residues 224-246; sequence TYAISSSLISFYIPVAIMIVTYT. Residues 247-296 are Cytoplasmic-facing; that stretch reads RIYRIAQVQIRRISSLERAAEHAQSCRSSAACAPDTSLRASIKKETKVLK. Residues 297–320 form a helical membrane-spanning segment; the sequence is TLSVIMGVFVCCWLPFFILNCMVP. At 321–340 the chain is on the extracellular side; it reads FCSGHPEGPPAGFPCVSETT. The helical transmembrane segment at 341–360 threads the bilayer; it reads FDVFVWFGWANSSLNPVIYA. Residues 361-477 lie on the Cytoplasmic side of the membrane; it reads FNADFQKVFA…ITPFTPNGFH (117 aa). The S-palmitoyl cysteine moiety is linked to residue Cys375.

The protein belongs to the G-protein coupled receptor 1 family. As to expression, neuron-specific, localized primarily within limbic regions of the brain.

It localises to the cell membrane. In terms of biological role, dopamine receptor whose activity is mediated by G proteins which activate adenylyl cyclase. The sequence is that of D(1B) dopamine receptor (DRD5) from Homo sapiens (Human).